Consider the following 354-residue polypeptide: S-adenosylmethionine:tRNA ribosyltransferase-isomerase (354 aa).

The protein belongs to the QueA family. Monomer.

Its subcellular location is the cytoplasm. The enzyme catalyses 7-aminomethyl-7-carbaguanosine(34) in tRNA + S-adenosyl-L-methionine = epoxyqueuosine(34) in tRNA + adenine + L-methionine + 2 H(+). It functions in the pathway tRNA modification; tRNA-queuosine biosynthesis. Transfers and isomerizes the ribose moiety from AdoMet to the 7-aminomethyl group of 7-deazaguanine (preQ1-tRNA) to give epoxyqueuosine (oQ-tRNA). The chain is S-adenosylmethionine:tRNA ribosyltransferase-isomerase from Salmonella newport (strain SL254).